Reading from the N-terminus, the 365-residue chain is 2-aminoethylphosphonate--pyruvate transaminase (365 aa).

The residue at position 194 (Lys-194) is an N6-(pyridoxal phosphate)lysine.

The protein belongs to the class-V pyridoxal-phosphate-dependent aminotransferase family. PhnW subfamily. In terms of assembly, homodimer. Pyridoxal 5'-phosphate is required as a cofactor.

The catalysed reaction is (2-aminoethyl)phosphonate + pyruvate = phosphonoacetaldehyde + L-alanine. Functionally, involved in phosphonate degradation. This chain is 2-aminoethylphosphonate--pyruvate transaminase, found in Bacillus cereus (strain G9842).